The sequence spans 486 residues: Transcription factor VOZ1 (486 aa).

Residues 208 to 405 (PPSAFLGPKC…VDGKKTSKGK (198 aa)) form a VOZ region. Positions 217, 222, 236, and 240 each coordinate Zn(2+). A C3H1-type; atypical zinc finger spans residues 217–240 (CALWDCPRPAQGFDWFQDYCSSFH). A disordered region spans residues 424–445 (EFPPENNTTNTTNNNKRCIKGR). A compositionally biased stretch (low complexity) spans 429-438 (NNTTNTTNNN).

In terms of assembly, homodimer. Interacts with phytochrome B (phyB). In terms of tissue distribution, ubiquitous. Expressed in the vascular bundles of various tissues, specifically in the phloem.

It localises to the cytoplasm. It is found in the nucleus. Functionally, transcriptional activator acting positively in the phytochrome B signaling pathway. Functions redundantly with VOZ2 to promote flowering downstream of phytochrome B (phyB). Down-regulates 'FLOWERING LOCUS C' (FLC) and up-regulates 'FLOWERING LOCUS T' (FT). Binds to the 38-bp cis-acting region of the AVP1 gene. Interacts with phyB in the cytoplasm and is translocated to the nucleus at signal transmission, where it is subjected to degradation in a phytochrome-dependent manner. The chain is Transcription factor VOZ1 (VOZ1) from Arabidopsis thaliana (Mouse-ear cress).